We begin with the raw amino-acid sequence, 930 residues long: Endoplasmic reticulum aminopeptidase 1 (930 aa).

Residues 1–2 (MP) lie on the Cytoplasmic side of the membrane. Residues 3–23 (SLLPLVLTFLSVSSPSWCQNS) traverse the membrane as a helical; Signal-anchor for type II membrane protein segment. Over 24-930 (DIESLKASNG…WLQKEKPELL (907 aa)) the chain is Lumenal. N-linked (GlcNAc...) asparagine glycosylation is found at Asn59 and Asn143. Substrate contacts are provided by residues Glu172 and 306-310 (GAMEN). A Zn(2+)-binding site is contributed by His342. The active site involves Glu343. Residues His346 and Glu365 each contribute to the Zn(2+) site. A disulfide bond links Cys393 and Cys432. Residues Asn403 and Asn655 are each glycosylated (N-linked (GlcNAc...) asparagine). Cys725 and Cys732 form a disulfide bridge. Asn749 and Asn890 each carry an N-linked (GlcNAc...) asparagine glycan.

This sequence belongs to the peptidase M1 family. Monomer. May also exist as a heterodimer; with ERAP2. Interacts with RBMX. The cofactor is Zn(2+). In terms of processing, N-glycosylated.

The protein resides in the endoplasmic reticulum membrane. Its function is as follows. Aminopeptidase that plays a central role in peptide trimming, a step required for the generation of most HLA class I-binding peptides. Peptide trimming is essential to customize longer precursor peptides to fit them to the correct length required for presentation on MHC class I molecules. Strongly prefers substrates 9-16 residues long. Rapidly degrades 13-mer to a 9-mer and then stops. Preferentially hydrolyzes the residue Leu and peptides with a hydrophobic C-terminus, while it has weak activity toward peptides with charged C-terminus. May play a role in the inactivation of peptide hormones. May be involved in the regulation of blood pressure through the inactivation of angiotensin II and/or the generation of bradykinin in the kidney. The chain is Endoplasmic reticulum aminopeptidase 1 (Erap1) from Mus musculus (Mouse).